The sequence spans 230 residues: CASP-like protein 2A2 (230 aa).

A disordered region spans residues 1–23 (MEKKDEGNPPMAVMGSRDENEDV). At 1 to 29 (MEKKDEGNPPMAVMGSRDENEDVKSTMRT) the chain is on the cytoplasmic side. The chain crosses the membrane as a helical span at residues 30–50 (AETMLRLVPVALCVSALVVML). Over 51–71 (KNTQTNDYGSLSYSDLGAFRY) the chain is Extracellular. Residues 72–92 (LVNANGICAGYSLLSAVIVAM) traverse the membrane as a helical segment. Residues 93–100 (PRAWTMPQ) are Cytoplasmic-facing. A helical transmembrane segment spans residues 101–121 (AWTFFLLDQVLTYVILAAGTV). The Extracellular segment spans residues 122–151 (STEVLYLANKGDTSIAWSAACASFGGFCHK). A helical membrane pass occupies residues 152 to 172 (ALISTVITFVAVIFYAALSLV). The Cytoplasmic segment spans residues 173–230 (SSYKLFSKYDAPVVTQSGEGIKTVTLGSPPPPPPPPPSNLHLHLHAKLACPAHNNSPN).

This sequence belongs to the Casparian strip membrane proteins (CASP) family. Homodimer and heterodimers.

Its subcellular location is the cell membrane. This is CASP-like protein 2A2 from Populus trichocarpa (Western balsam poplar).